The sequence spans 186 residues: Ran guanine nucleotide release factor (186 aa).

The segment at 27–70 is interaction with RAN; it reads DLRPVPDNQEVFCHPVTDQSLIVELLELQAHVRGEAAARYHFED.

The protein belongs to the MOG1 family. Monomer. Interacts with RAN, both RAN-GTP and RAN-GDP. Competes with RCC1 for a common binding site on RAN and thereby inhibits RCC1-mediated nucleotide exchange. Forms a complex with RAN-GTP and RANBP1. Interacts with the cytoplasmic loop 2 of SCN5A. In terms of tissue distribution, isoform 1 and isoform 2 are ubiquitously expressed. Detected in heart and brain.

Its subcellular location is the nucleus. The protein localises to the cytoplasm. It is found in the perinuclear region. The protein resides in the cell membrane. In terms of biological role, may regulate the intracellular trafficking of RAN. Promotes guanine nucleotide release from RAN and inhibits binding of new GTP by preventing the binding of the RAN guanine nucleotide exchange factor RCC1. Regulates the levels of GTP-bound RAN in the nucleus, and thereby plays a role in the regulation of RAN-dependent mitotic spindle dynamics. Enhances the expression of SCN5A at the cell membrane in cardiomyocytes. This is Ran guanine nucleotide release factor (RANGRF) from Homo sapiens (Human).